A 363-amino-acid polypeptide reads, in one-letter code: N-acetylmuramate/N-acetylglucosamine kinase (363 aa).

This sequence belongs to the kinase AmgK family.

The enzyme catalyses N-acetyl-D-muramate + ATP = N-acetyl-alpha-D-muramate 1-phosphate + ADP + H(+). It carries out the reaction N-acetyl-D-glucosamine + ATP = N-acetyl-alpha-D-glucosamine 1-phosphate + ADP + H(+). It functions in the pathway cell wall biogenesis; peptidoglycan recycling. In terms of biological role, sugar kinase that catalyzes the ATP-dependent phosphorylation of N-acetylmuramate (MurNAc) and N-acetylglucosamine (GlcNAc) at its C1 hydroxyl group, leading to MurNAc alpha-1P and GlcNAc alpha-1P, respectively. Is likely involved in peptidoglycan recycling as part of a cell wall recycling pathway that bypasses de novo biosynthesis of the peptidoglycan precursor UDP-MurNAc. Is able to complement the fosfomycin sensitivity phenotype of a P.putida mutant lacking amgK. The sequence is that of N-acetylmuramate/N-acetylglucosamine kinase from Caulobacter vibrioides (strain ATCC 19089 / CIP 103742 / CB 15) (Caulobacter crescentus).